Reading from the N-terminus, the 466-residue chain is UDP-N-acetylmuramoylalanine--D-glutamate ligase (466 aa).

121–127 (GTNGKST) lines the ATP pocket.

This sequence belongs to the MurCDEF family.

Its subcellular location is the cytoplasm. It catalyses the reaction UDP-N-acetyl-alpha-D-muramoyl-L-alanine + D-glutamate + ATP = UDP-N-acetyl-alpha-D-muramoyl-L-alanyl-D-glutamate + ADP + phosphate + H(+). It functions in the pathway cell wall biogenesis; peptidoglycan biosynthesis. Functionally, cell wall formation. Catalyzes the addition of glutamate to the nucleotide precursor UDP-N-acetylmuramoyl-L-alanine (UMA). This Mesorhizobium japonicum (strain LMG 29417 / CECT 9101 / MAFF 303099) (Mesorhizobium loti (strain MAFF 303099)) protein is UDP-N-acetylmuramoylalanine--D-glutamate ligase.